Here is a 145-residue protein sequence, read N- to C-terminus: Protein cornichon homolog 1 (145 aa).

A run of 3 helical transmembrane segments spans residues 5–25 (FAAFCYLLALIAVGFCIFFAI), 57–77 (IIHGTFTVLFIFSWQLISILA), and 116–136 (LRISWIKLAFYLVSFFYYLYA).

The protein belongs to the cornichon family. In terms of assembly, interacts with glr-1. In terms of tissue distribution, widely expressed in the nervous system including in the AVA interneurons.

Its subcellular location is the endoplasmic reticulum membrane. It is found in the synapse. The protein localises to the cell projection. The protein resides in the dendrite. Functionally, negatively regulates export of glr-1 from the endoplasmic reticulum to synapses. In Caenorhabditis elegans, this protein is Protein cornichon homolog 1.